A 993-amino-acid chain; its full sequence is Type II inositol 1,4,5-trisphosphate 5-phosphatase (993 aa).

The 127-residue stretch at 22–148 (QGVLCKGDSR…PEFEWLSRHT (127 aa)) folds into the PH domain. 2 stretches are compositionally biased toward basic and acidic residues: residues 149–163 (CAEPDAESPKPREWN) and 294–303 (SKSDMSEKVR). 2 disordered regions span residues 149-191 (CAEP…GLED) and 236-304 (EALE…KVRS). The interval 342 to 668 (IQNFRFFVGT…LDKMENANIP (327 aa)) is 5-phosphatase. Mg(2+)-binding residues include Asn355 and Glu383. Substrate is bound by residues Glu383, 459–460 (NK), 582–583 (YK), and 596–598 (KCR). Residues 669 to 782 (SVTLSKREFC…LSVSGNYLPS (114 aa)) are ASH. The Rho-GAP domain maps to 821–993 (SQLENPMEIP…FIHQFLCGPL (173 aa)). Cys990 is modified (cysteine methyl ester). Residue Cys990 is the site of S-farnesyl cysteine attachment. A propeptide spans 991 to 993 (GPL) (removed in mature form).

This sequence belongs to the inositol 1,4,5-trisphosphate 5-phosphatase type II family. As to quaternary structure, interacts with APPL1, PHETA1 and PHETA2. Interacts with several Rab GTPases, at least RAB1A, RAB2A, RAB5A, RAB6A, RAB8A, RAB9A and RAB33B; these interactions may play a dual role in targeting INPP5B to the specific membranes and stimulating its phosphatase activity. Interacts preferentially with non-phosphorylated RAB8A; phosphorylation of RAB8A on 'Thr-72' disrupts this interaction. Interacts with INPP5F. Isoprenylation at Cys-990 may be required for localization at the membrane. Post-translationally, may be proteolytically cleaved after Lys-320 as inferred from N-terminal protein sequence of the 75 kda form. As to expression, detected in kidney, liver, brain, lung and testis (at protein level). Detected in kidney and liver, and at lower levels in brain, lung and testis.

It is found in the cytoplasm. The protein localises to the cytosol. It localises to the endoplasmic reticulum-Golgi intermediate compartment. Its subcellular location is the early endosome membrane. The protein resides in the membrane. It is found in the cytoplasmic vesicle. The protein localises to the phagosome membrane. The enzyme catalyses a 1,2-diacyl-sn-glycero-3-phospho-(1D-myo-inositol-4,5-bisphosphate) + H2O = a 1,2-diacyl-sn-glycero-3-phospho-(1D-myo-inositol 4-phosphate) + phosphate. In terms of biological role, hydrolyzes phosphatidylinositol 4,5-bisphosphate (PtIns(4,5)P2) and the signaling molecule phosphatidylinositol 1,4,5-trisphosphate (PtIns(1,4,5)P3), and thereby modulates cellular signaling events. In Mus musculus (Mouse), this protein is Type II inositol 1,4,5-trisphosphate 5-phosphatase (Inpp5b).